The following is a 282-amino-acid chain: Small-conductance mechanosensitive channel (282 aa).

The Periplasmic portion of the chain corresponds to 1 to 23 (MWADIYHKLVEIYDIKAVKFLLD). A helical membrane pass occupies residues 24–46 (VLKILIIAFIGIKFADFLIYRFY). Over 47 to 66 (KLYSKSKIQLPQRKIDTLTS) the chain is Cytoplasmic. Residues 67–87 (LTKNAVRYIIYFLAGASILKL) traverse the membrane as a helical segment. Topologically, residues 88–89 (FN) are periplasmic. The helical transmembrane segment at 90-110 (IDMTSLLAVAGIGSLAIGFGA) threads the bilayer. The Cytoplasmic segment spans residues 111 to 282 (QNLVKDMISG…TVILSEKKTN (172 aa)).

This sequence belongs to the MscS (TC 1.A.23) family. In terms of assembly, homoheptamer.

It is found in the cell inner membrane. In terms of biological role, mechanosensitive ion channel that participates in the regulation of osmotic pressure changes within the cell, opening in response to stretch forces in the membrane lipid bilayer, without the need for other proteins. Has high selectivity for anions, and may contribute to resistance to hypoosmotic shock. This chain is Small-conductance mechanosensitive channel, found in Caldanaerobacter subterraneus subsp. tengcongensis (strain DSM 15242 / JCM 11007 / NBRC 100824 / MB4) (Thermoanaerobacter tengcongensis).